The following is a 123-amino-acid chain: Small ribosomal subunit protein uS12 (123 aa).

Belongs to the universal ribosomal protein uS12 family. In terms of assembly, part of the 30S ribosomal subunit. Contacts proteins S8 and S17. May interact with IF1 in the 30S initiation complex.

With S4 and S5 plays an important role in translational accuracy. Its function is as follows. Interacts with and stabilizes bases of the 16S rRNA that are involved in tRNA selection in the A site and with the mRNA backbone. Located at the interface of the 30S and 50S subunits, it traverses the body of the 30S subunit contacting proteins on the other side and probably holding the rRNA structure together. The combined cluster of proteins S8, S12 and S17 appears to hold together the shoulder and platform of the 30S subunit. The polypeptide is Small ribosomal subunit protein uS12 (Corynebacterium diphtheriae (strain ATCC 700971 / NCTC 13129 / Biotype gravis)).